The following is a 113-amino-acid chain: Defense protein 2 (113 aa).

The protein belongs to the attacin/sarcotoxin-2 family.

Its subcellular location is the secreted. Its function is as follows. Has antibacterial activity against both Gram-positive and Gram-negative bacteria. The sequence is that of Defense protein 2 from Lonomia obliqua (Moth).